A 60-amino-acid polypeptide reads, in one-letter code: Potassium channel toxin alpha-KTx 15.9 (60 aa).

A signal peptide spans 1 to 22 (MKIFLPVLVMLILCSMCLLTEG). 3 cysteine pairs are disulfide-bonded: cysteine 30-cysteine 51, cysteine 36-cysteine 56, and cysteine 40-cysteine 58.

Belongs to the short scorpion toxin superfamily. Potassium channel inhibitor family. Alpha-KTx 15 subfamily. In terms of tissue distribution, expressed by the venom gland.

It is found in the secreted. In terms of biological role, blocker of A-type voltage-gated potassium channels of cerebellar granular cells. May also inhibit Kv4/KCND when coexpressed with DPP6 or DPP10. The occlusion of the outer entry of the K(+) conducting pore is partially reversible and affects both open and closed channels. It shares the same target in rat brain than BmTX3 (AC Q8I0L5) and AmmTX3 (AC P60208). Has been shown to weakly inhibit TRPV1 channels. The sequence is that of Potassium channel toxin alpha-KTx 15.9 from Lychas mucronatus (Chinese swimming scorpion).